We begin with the raw amino-acid sequence, 456 residues long: Bifunctional protein GlmU (456 aa).

A pyrophosphorylase region spans residues 1–229 (MLNSAMSVVI…ISETDGVNNR (229 aa)). UDP-N-acetyl-alpha-D-glucosamine-binding positions include 11 to 14 (LAAG), lysine 25, glutamine 76, 81 to 82 (GT), 103 to 105 (YGD), glycine 140, glutamate 154, asparagine 169, and asparagine 227. Aspartate 105 is a binding site for Mg(2+). Asparagine 227 contributes to the Mg(2+) binding site. Residues 230 to 250 (LQLSRLERIYQAEQAEKLLLS) are linker. Residues 251–456 (GVMLRDPARF…QGWQRPVKKK (206 aa)) are N-acetyltransferase. Arginine 333 and lysine 351 together coordinate UDP-N-acetyl-alpha-D-glucosamine. Histidine 363 acts as the Proton acceptor in catalysis. The UDP-N-acetyl-alpha-D-glucosamine site is built by tyrosine 366 and asparagine 377. Residues alanine 380, 386-387 (NY), serine 405, alanine 423, and arginine 440 each bind acetyl-CoA.

In the N-terminal section; belongs to the N-acetylglucosamine-1-phosphate uridyltransferase family. This sequence in the C-terminal section; belongs to the transferase hexapeptide repeat family. In terms of assembly, homotrimer. The cofactor is Mg(2+).

It is found in the cytoplasm. The enzyme catalyses alpha-D-glucosamine 1-phosphate + acetyl-CoA = N-acetyl-alpha-D-glucosamine 1-phosphate + CoA + H(+). The catalysed reaction is N-acetyl-alpha-D-glucosamine 1-phosphate + UTP + H(+) = UDP-N-acetyl-alpha-D-glucosamine + diphosphate. Its pathway is nucleotide-sugar biosynthesis; UDP-N-acetyl-alpha-D-glucosamine biosynthesis; N-acetyl-alpha-D-glucosamine 1-phosphate from alpha-D-glucosamine 6-phosphate (route II): step 2/2. The protein operates within nucleotide-sugar biosynthesis; UDP-N-acetyl-alpha-D-glucosamine biosynthesis; UDP-N-acetyl-alpha-D-glucosamine from N-acetyl-alpha-D-glucosamine 1-phosphate: step 1/1. It functions in the pathway bacterial outer membrane biogenesis; LPS lipid A biosynthesis. Its function is as follows. Catalyzes the last two sequential reactions in the de novo biosynthetic pathway for UDP-N-acetylglucosamine (UDP-GlcNAc). The C-terminal domain catalyzes the transfer of acetyl group from acetyl coenzyme A to glucosamine-1-phosphate (GlcN-1-P) to produce N-acetylglucosamine-1-phosphate (GlcNAc-1-P), which is converted into UDP-GlcNAc by the transfer of uridine 5-monophosphate (from uridine 5-triphosphate), a reaction catalyzed by the N-terminal domain. This Salmonella typhi protein is Bifunctional protein GlmU.